The chain runs to 108 residues: MMKGQLAGLMKQAQQMQENMKKMQEQLAQIEVEGQSGAGLVKVTMTCKNDVRRVSIDPSLLADDKDMLEDLVAAAFNDAVRKAEATAQEKMGGMTSGLPLPPGFKLPF.

Residues 87–108 (AQEKMGGMTSGLPLPPGFKLPF) form a disordered region. The segment covering 99–108 (PLPPGFKLPF) has biased composition (pro residues).

It belongs to the YbaB/EbfC family. In terms of assembly, homodimer.

It localises to the cytoplasm. The protein resides in the nucleoid. Functionally, binds to DNA and alters its conformation. May be involved in regulation of gene expression, nucleoid organization and DNA protection. This Paraburkholderia phymatum (strain DSM 17167 / CIP 108236 / LMG 21445 / STM815) (Burkholderia phymatum) protein is Nucleoid-associated protein Bphy_0952.